The sequence spans 309 residues: Porphobilinogen deaminase (309 aa).

At C241 the chain carries S-(dipyrrolylmethanemethyl)cysteine.

It belongs to the HMBS family. As to quaternary structure, monomer. The cofactor is dipyrromethane.

The enzyme catalyses 4 porphobilinogen + H2O = hydroxymethylbilane + 4 NH4(+). It functions in the pathway porphyrin-containing compound metabolism; protoporphyrin-IX biosynthesis; coproporphyrinogen-III from 5-aminolevulinate: step 2/4. In terms of biological role, tetrapolymerization of the monopyrrole PBG into the hydroxymethylbilane pre-uroporphyrinogen in several discrete steps. The sequence is that of Porphobilinogen deaminase from Bacillus thuringiensis (strain Al Hakam).